The sequence spans 163 residues: Endoribonuclease YbeY (163 aa).

His-129, His-133, and His-139 together coordinate Zn(2+).

The protein belongs to the endoribonuclease YbeY family. The cofactor is Zn(2+).

The protein localises to the cytoplasm. Its function is as follows. Single strand-specific metallo-endoribonuclease involved in late-stage 70S ribosome quality control and in maturation of the 3' terminus of the 16S rRNA. The chain is Endoribonuclease YbeY from Picosynechococcus sp. (strain ATCC 27264 / PCC 7002 / PR-6) (Agmenellum quadruplicatum).